Consider the following 469-residue polypeptide: Glutamate--tRNA ligase 1 (469 aa).

The 'HIGH' region motif lies at 11 to 21 (PSPTGHLHLGG). Positions 238-242 (KLSKR) match the 'KMSKS' region motif. Lys241 serves as a coordination point for ATP.

This sequence belongs to the class-I aminoacyl-tRNA synthetase family. Glutamate--tRNA ligase type 1 subfamily. In terms of assembly, monomer.

The protein resides in the cytoplasm. It carries out the reaction tRNA(Glu) + L-glutamate + ATP = L-glutamyl-tRNA(Glu) + AMP + diphosphate. Functionally, catalyzes the attachment of glutamate to tRNA(Glu) in a two-step reaction: glutamate is first activated by ATP to form Glu-AMP and then transferred to the acceptor end of tRNA(Glu). This chain is Glutamate--tRNA ligase 1, found in Ehrlichia canis (strain Jake).